Reading from the N-terminus, the 375-residue chain is tRNA-specific 2-thiouridylase MnmA (375 aa).

Residues 16–23 (GMSGGVDS) and methionine 42 contribute to the ATP site. The segment at 102 to 104 (NPD) is interaction with target base in tRNA. Catalysis depends on cysteine 107, which acts as the Nucleophile. The cysteines at positions 107 and 203 are disulfide-linked. ATP is bound at residue glycine 131. Residues 153 to 155 (KDQ) form an interaction with tRNA region. The active-site Cysteine persulfide intermediate is cysteine 203. An interaction with tRNA region spans residues 315-316 (RY).

Belongs to the MnmA/TRMU family.

Its subcellular location is the cytoplasm. It catalyses the reaction S-sulfanyl-L-cysteinyl-[protein] + uridine(34) in tRNA + AH2 + ATP = 2-thiouridine(34) in tRNA + L-cysteinyl-[protein] + A + AMP + diphosphate + H(+). Catalyzes the 2-thiolation of uridine at the wobble position (U34) of tRNA, leading to the formation of s(2)U34. This is tRNA-specific 2-thiouridylase MnmA from Pseudomonas aeruginosa (strain LESB58).